The chain runs to 137 residues: Nucleoside diphosphate kinase (137 aa).

ATP contacts are provided by lysine 10, phenylalanine 59, arginine 87, threonine 93, arginine 104, and asparagine 114. Histidine 117 (pros-phosphohistidine intermediate) is an active-site residue.

This sequence belongs to the NDK family. In terms of assembly, homotetramer. Mg(2+) is required as a cofactor.

It localises to the cytoplasm. It catalyses the reaction a 2'-deoxyribonucleoside 5'-diphosphate + ATP = a 2'-deoxyribonucleoside 5'-triphosphate + ADP. The catalysed reaction is a ribonucleoside 5'-diphosphate + ATP = a ribonucleoside 5'-triphosphate + ADP. In terms of biological role, major role in the synthesis of nucleoside triphosphates other than ATP. The ATP gamma phosphate is transferred to the NDP beta phosphate via a ping-pong mechanism, using a phosphorylated active-site intermediate. The polypeptide is Nucleoside diphosphate kinase (Streptomyces avermitilis (strain ATCC 31267 / DSM 46492 / JCM 5070 / NBRC 14893 / NCIMB 12804 / NRRL 8165 / MA-4680)).